The sequence spans 368 residues: Quinolinate synthase (368 aa).

Histidine 46 and serine 63 together coordinate iminosuccinate. Cysteine 110 contributes to the [4Fe-4S] cluster binding site. Iminosuccinate is bound by residues 141 to 143 and serine 162; that span reads YVN. Cysteine 230 contributes to the [4Fe-4S] cluster binding site. Iminosuccinate-binding positions include 256 to 258 and threonine 273; that span reads HPE. Cysteine 320 is a binding site for [4Fe-4S] cluster.

It belongs to the quinolinate synthase family. Type 3 subfamily. [4Fe-4S] cluster serves as cofactor.

The protein localises to the cytoplasm. The catalysed reaction is iminosuccinate + dihydroxyacetone phosphate = quinolinate + phosphate + 2 H2O + H(+). The protein operates within cofactor biosynthesis; NAD(+) biosynthesis; quinolinate from iminoaspartate: step 1/1. Catalyzes the condensation of iminoaspartate with dihydroxyacetone phosphate to form quinolinate. In Bacillus thuringiensis subsp. konkukian (strain 97-27), this protein is Quinolinate synthase.